Consider the following 177-residue polypeptide: Peptide methionine sulfoxide reductase MsrA (177 aa).

The active site involves Cys-14.

It belongs to the MsrA Met sulfoxide reductase family.

The catalysed reaction is L-methionyl-[protein] + [thioredoxin]-disulfide + H2O = L-methionyl-(S)-S-oxide-[protein] + [thioredoxin]-dithiol. It catalyses the reaction [thioredoxin]-disulfide + L-methionine + H2O = L-methionine (S)-S-oxide + [thioredoxin]-dithiol. In terms of biological role, has an important function as a repair enzyme for proteins that have been inactivated by oxidation. Catalyzes the reversible oxidation-reduction of methionine sulfoxide in proteins to methionine. The protein is Peptide methionine sulfoxide reductase MsrA of Bacillus velezensis (strain DSM 23117 / BGSC 10A6 / LMG 26770 / FZB42) (Bacillus amyloliquefaciens subsp. plantarum).